A 125-amino-acid chain; its full sequence is Small ribosomal subunit protein uS13 (125 aa).

Belongs to the universal ribosomal protein uS13 family. As to quaternary structure, part of the 30S ribosomal subunit. Forms a loose heterodimer with protein S19. Forms two bridges to the 50S subunit in the 70S ribosome.

In terms of biological role, located at the top of the head of the 30S subunit, it contacts several helices of the 16S rRNA. In the 70S ribosome it contacts the 23S rRNA (bridge B1a) and protein L5 of the 50S subunit (bridge B1b), connecting the 2 subunits; these bridges are implicated in subunit movement. Contacts the tRNAs in the A and P-sites. In Orientia tsutsugamushi (strain Ikeda) (Rickettsia tsutsugamushi), this protein is Small ribosomal subunit protein uS13.